The primary structure comprises 349 residues: Ferredoxin--NADP reductase 1 (349 aa).

The FAD site is built by Glu36, Lys44, Tyr48, Ile88, Leu123, Asp290, and Ser331.

This sequence belongs to the ferredoxin--NADP reductase type 2 family. Homodimer. FAD is required as a cofactor.

The catalysed reaction is 2 reduced [2Fe-2S]-[ferredoxin] + NADP(+) + H(+) = 2 oxidized [2Fe-2S]-[ferredoxin] + NADPH. In Bacillus thuringiensis (strain Al Hakam), this protein is Ferredoxin--NADP reductase 1.